Reading from the N-terminus, the 121-residue chain is uncharacterized protein (121 aa).

This is an uncharacterized protein from Bacillus subtilis (strain 168).